We begin with the raw amino-acid sequence, 507 residues long: Maturase K (507 aa).

Belongs to the intron maturase 2 family. MatK subfamily.

It is found in the plastid. The protein localises to the chloroplast. In terms of biological role, usually encoded in the trnK tRNA gene intron. Probably assists in splicing its own and other chloroplast group II introns. The sequence is that of Maturase K from Annona muricata (Soursop).